Here is a 343-residue protein sequence, read N- to C-terminus: 4-hydroxy-2-oxovalerate aldolase (343 aa).

In terms of domain architecture, Pyruvate carboxyltransferase spans 4-254 (PRLTDTTLRD…NPGLDVFSLM (251 aa)). Substrate is bound at residue 12–13 (RD). Asp13 contacts Mn(2+). The active-site Proton acceptor is the His16. Substrate-binding residues include Ser166 and His193. Mn(2+)-binding residues include His193 and His195. Tyr284 lines the substrate pocket.

This sequence belongs to the 4-hydroxy-2-oxovalerate aldolase family.

The catalysed reaction is (S)-4-hydroxy-2-oxopentanoate = acetaldehyde + pyruvate. In Chloroflexus aurantiacus (strain ATCC 29364 / DSM 637 / Y-400-fl), this protein is 4-hydroxy-2-oxovalerate aldolase.